Here is a 1155-residue protein sequence, read N- to C-terminus: DNA-directed RNA polymerase subunit beta (1155 aa).

The protein belongs to the RNA polymerase beta chain family. As to quaternary structure, the RNAP catalytic core consists of 2 alpha, 1 beta, 1 beta' and 1 omega subunit. When a sigma factor is associated with the core the holoenzyme is formed, which can initiate transcription.

It catalyses the reaction RNA(n) + a ribonucleoside 5'-triphosphate = RNA(n+1) + diphosphate. DNA-dependent RNA polymerase catalyzes the transcription of DNA into RNA using the four ribonucleoside triphosphates as substrates. This Borreliella afzelii (strain PKo) (Borrelia afzelii) protein is DNA-directed RNA polymerase subunit beta.